Reading from the N-terminus, the 156-residue chain is 6,7-dimethyl-8-ribityllumazine synthase (156 aa).

5-amino-6-(D-ribitylamino)uracil is bound by residues Phe23, 57–59 (SWE), and 81–83 (AVV). Residue 86 to 87 (ET) coordinates (2S)-2-hydroxy-3-oxobutyl phosphate. The Proton donor role is filled by His89. A 5-amino-6-(D-ribitylamino)uracil-binding site is contributed by Phe114. Arg128 contributes to the (2S)-2-hydroxy-3-oxobutyl phosphate binding site.

Belongs to the DMRL synthase family.

The catalysed reaction is (2S)-2-hydroxy-3-oxobutyl phosphate + 5-amino-6-(D-ribitylamino)uracil = 6,7-dimethyl-8-(1-D-ribityl)lumazine + phosphate + 2 H2O + H(+). It functions in the pathway cofactor biosynthesis; riboflavin biosynthesis; riboflavin from 2-hydroxy-3-oxobutyl phosphate and 5-amino-6-(D-ribitylamino)uracil: step 1/2. Catalyzes the formation of 6,7-dimethyl-8-ribityllumazine by condensation of 5-amino-6-(D-ribitylamino)uracil with 3,4-dihydroxy-2-butanone 4-phosphate. This is the penultimate step in the biosynthesis of riboflavin. The polypeptide is 6,7-dimethyl-8-ribityllumazine synthase (Salinibacter ruber (strain DSM 13855 / M31)).